The chain runs to 264 residues: Myozenin-2 (264 aa).

The residue at position 53 (Arg-53) is an Omega-N-methylarginine. Residues 90 to 135 (GRVDGSNLEGGSQQGPSTPPNTPDPRSPPNPENIAPGYSGPLKEIP) are disordered. Ser-101 is modified (phosphoserine). Over residues 106 to 120 (STPPNTPDPRSPPNP) the composition is skewed to pro residues. 2 positions are modified to phosphothreonine: Thr-107 and Thr-111. Phosphoserine is present on Ser-116.

It belongs to the myozenin family. As to quaternary structure, interacts via its C-terminus with spectrin repeats 3 and 4 of ACTN2. Interacts with ACTN1, LDB3, MYOT and PPP3CA. Expressed specifically in heart and skeletal muscle. In skeletal muscle, localized to the soleus and plantaris muscles, which are predominantly composed of slow-twitch fibers.

The protein localises to the cytoplasm. The protein resides in the myofibril. It localises to the sarcomere. It is found in the z line. Functionally, myozenins may serve as intracellular binding proteins involved in linking Z line proteins such as alpha-actinin, gamma-filamin, TCAP/telethonin, LDB3/ZASP and localizing calcineurin signaling to the sarcomere. Plays an important role in the modulation of calcineurin signaling. May play a role in myofibrillogenesis. This chain is Myozenin-2, found in Mus musculus (Mouse).